We begin with the raw amino-acid sequence, 348 residues long: S-adenosylmethionine:tRNA ribosyltransferase-isomerase (348 aa).

This sequence belongs to the QueA family. Monomer.

It is found in the cytoplasm. The catalysed reaction is 7-aminomethyl-7-carbaguanosine(34) in tRNA + S-adenosyl-L-methionine = epoxyqueuosine(34) in tRNA + adenine + L-methionine + 2 H(+). The protein operates within tRNA modification; tRNA-queuosine biosynthesis. In terms of biological role, transfers and isomerizes the ribose moiety from AdoMet to the 7-aminomethyl group of 7-deazaguanine (preQ1-tRNA) to give epoxyqueuosine (oQ-tRNA). The sequence is that of S-adenosylmethionine:tRNA ribosyltransferase-isomerase from Cytophaga hutchinsonii (strain ATCC 33406 / DSM 1761 / CIP 103989 / NBRC 15051 / NCIMB 9469 / D465).